A 372-amino-acid polypeptide reads, in one-letter code: Segmentation polarity homeobox protein engrailed (372 aa).

Disordered regions lie at residues 1-35, 47-112, 196-246, and 261-286; these read MAFE…YSPQ, YERG…LQPT, ERLS…QSNP, and DRPS…PRTA. 2 stretches are compositionally biased toward basic and acidic residues: residues 79–105 and 197–215; these read DYYR…DRSR and RLSR…KRPD. Residues 216 to 244 are compositionally biased toward low complexity; the sequence is SASSIVSSTSSGAVSTCGSSDASSIQSQS. Positions 280–339 form a DNA-binding region, homeobox; sequence EKRPRTAFSGAQLARLKHEFAENRYLTERRRQSLAAELGLAEAQIKIWFQNKRAKIKKAS.

The protein belongs to the engrailed homeobox family. As to expression, expressed in the middle silk gland but not in the posterior silk gland during the fourth molt/fifth intermolt period.

Its subcellular location is the nucleus. Functionally, this protein might be involved in the compartmentalization of the silk gland. This is Segmentation polarity homeobox protein engrailed (en) from Bombyx mori (Silk moth).